The sequence spans 544 residues: Putative pentatricopeptide repeat-containing protein At5g59200, chloroplastic (544 aa).

The segment at 1-21 (MISSLAAITGGPSTFRRDPDS) is disordered. Residues 1 to 25 (MISSLAAITGGPSTFRRDPDSNTLR) constitute a chloroplast transit peptide. PPR repeat units follow at residues 60–90 (DAFVVFELIRVCSTLDSVDYAYDVFSYVSNP), 91–125 (NVYLYTAMIDGFVSSGRSADGVSLYHRMIHNSVLP), 127–156 (NYVITSVLKACDLKVCREIHAQVLKLGFGS), 157–187 (SRSVGLKMMEIYGKSGELVNAKKMFDEMPDR), 188–218 (DHVAATVMINCYSECGFIKEALELFQDVKIK), 219–253 (DTVCWTAMIDGLVRNKEMNKALELFREMQMENVSA), 254–288 (NEFTAVCVLSACSDLGALELGRWVHSFVENQRMEL), 289–319 (SNFVGNALINMYSRCGDINEARRVFRVMRDK), 320–354 (DVISYNTMISGLAMHGASVEAINEFRDMVNRGFRP), 355–385 (NQVTLVALLNACSHGGLLDIGLEVFNSMKRV), and 391–421 (QIEHYGCIVDLLGRVGRLEEAYRFIENIPIE). A type E motif region spans residues 426–501 (MLGTLLSACK…EPGCSTIEVD (76 aa)). The segment at 502–532 (NQIHEFLVGDIAHPHKEAIYQRLQELNRILR) is type E(+) motif.

It belongs to the PPR family. PCMP-E subfamily.

The protein resides in the plastid. It localises to the chloroplast. Involved in RNA editing event in chloroplasts. Required for the editing of a single site in rpl23 transcript. This Arabidopsis thaliana (Mouse-ear cress) protein is Putative pentatricopeptide repeat-containing protein At5g59200, chloroplastic (PCMP-E41).